The sequence spans 285 residues: MELSSPSKKTTTSPINIPGGNRDNLIIGPHSHSFKTDPFSSNNSSLLSKISTNPSLESPFSSKSLLDCSPVQAVKKSLESEAKTHSLDEETNEQTDVKILNIADFPTDELILMISALLNRIITANDETTDVSQQVSDETEDELLTPILAFYGKNVPEIAVVQYLERIQKYCPTTNDIFLSLLVYFDRISKNYGHSSERNGCAKQLFVMDSGNIHRLLITGVTICTKFLSDFFYSNSRYAKVGGISLQELNHLELQFLILCDFKLLVSVEEMQKYANLLYKFWNDQ.

A compositionally biased stretch (low complexity) spans 1 to 14 (MELSSPSKKTTTSP). The interval 1–42 (MELSSPSKKTTTSPINIPGGNRDNLIIGPHSHSFKTDPFSSN) is disordered. Serine 69 carries the post-translational modification Phosphoserine.

It belongs to the cyclin family. PHO80 subfamily. In terms of assembly, forms a cyclin-CDK complex with PHO85. Interacts with the substrate proteins MMR1 and YJL084C. Interacts with the CDK inhibitor (CKI) PHO81.

Its subcellular location is the cytoplasm. With respect to regulation, the PCL7-PHO85 cyclin-CDK is inhibited by PHO81 in low-phosphate conditions. Its function is as follows. Cyclin partner of the cyclin-dependent kinase (CDK) PHO85. Together with cyclin PCL6, controls glycogen phosphorylase and glycogen synthase activities in response to nutrient availablility. The PCL7-PHO85 cyclin-CDK holoenzyme has GLC8 kinase activity and phosphorylates and inactivates the phosphatase PP1-2 inhibitor GLC8, causing activation of PP1-2, which then dephosphorylates and activates glycogen phosphorylase. PCL7-PHO85 also phosphorylates MMR1 and YJL084C. The polypeptide is PHO85 cyclin-7 (PCL7) (Saccharomyces cerevisiae (strain ATCC 204508 / S288c) (Baker's yeast)).